A 1045-amino-acid chain; its full sequence is Elongation factor 3 (1045 aa).

7 HEAT repeats span residues 5–42, 43–85, 86–123, 125–162, 166–203, 205–241, and 242–279; these read DQSLKVLEELFKNLSVATADNRVEAAQEVASFLNGNII, EHDI…PSVE, PFVITLVPEICAKAGDKDKDVQAVASKTLVAISKAINP, AIKAYLPHLTKSLETTNKWQEKVSVLAAISALVDAAKE, LRMPELIPVLSETMWDTKKEVKEAATATMTKATETVDN, DIERFIPQLISCIADPKQVPETVHLLGATTFVAEVTP, and ATLSIMVPLLSRGLAERETSIKRKAAVIIDNMCKLVED. ADP-binding residues include Ile42, His44, and Ser83. The ADP site is built by Thr392, His396, and Glu397. 2 consecutive ABC transporter domains span residues 426–641 and 667–993; these read DEGE…YYEL and VKVS…KKED. 4 residues coordinate ADP: Asn703, Glu922, Asn925, and His951. The interval 974–1045 is disordered; it reads SGHNWVSGQG…AYVSSDDEDF (72 aa). The span at 1007–1031 shows a compositional bias: basic residues; the sequence is GGKKKKKLSSAELRKKKKERMKKKK.

This sequence belongs to the ABC transporter superfamily. ABCF family. EF3 subfamily. Monomer.

The protein localises to the cytoplasm. It is found in the cytosol. The catalysed reaction is ATP + H2O = ADP + phosphate + H(+). It functions in the pathway protein biosynthesis; polypeptide chain elongation. Functionally, ribosome-dependent ATPase that functions in cytoplasmic translation elongation. Required for the ATP-dependent release of deacylated tRNA from the ribosomal E-site during protein biosynthesis. Stimulates the eEF1A-dependent binding of aminoacyl-tRNA to the ribosomal A-site, which has reduced affinity for tRNA as long as the E-site is occupied. Assists translation termination by stimulating the release of nascent protein from the ribosome by release factors. This Candida glabrata (strain ATCC 2001 / BCRC 20586 / JCM 3761 / NBRC 0622 / NRRL Y-65 / CBS 138) (Yeast) protein is Elongation factor 3 (TEF3).